The following is a 248-amino-acid chain: MAGHSQFKNIMHRKGRQDAQKSKLFSKLAREITVAAKLGAPDPAMNARLRSAIIAARQENMPKDNIERAIKKAIGSDGDNYDEMRYEGYGPGGVAVIVEALTDNRNRAASDIRSYFTKSGGNLGETGSVAFMFDHTGLIEYDAGVASADDVLDAAIEAGADDVLSSDTGHEVYASHDTFREVAKALEAKFGEARKAALIWKPQNTVPVDDETGEKLLKLIDLLNEHDDVQNVYANFEISDALMAKMGG.

Residues 1-21 form a disordered region; the sequence is MAGHSQFKNIMHRKGRQDAQK.

This sequence belongs to the TACO1 family.

It is found in the cytoplasm. In Rhodopseudomonas palustris (strain BisA53), this protein is Probable transcriptional regulatory protein RPE_4771.